A 288-amino-acid chain; its full sequence is Ribosomal protein L11 methyltransferase (288 aa).

Residues Thr134, Gly157, Asp179, and Asn224 each contribute to the S-adenosyl-L-methionine site.

The protein belongs to the methyltransferase superfamily. PrmA family.

It localises to the cytoplasm. It catalyses the reaction L-lysyl-[protein] + 3 S-adenosyl-L-methionine = N(6),N(6),N(6)-trimethyl-L-lysyl-[protein] + 3 S-adenosyl-L-homocysteine + 3 H(+). In terms of biological role, methylates ribosomal protein L11. The polypeptide is Ribosomal protein L11 methyltransferase (Caulobacter sp. (strain K31)).